The following is a 192-amino-acid chain: MKIVLASASSRRRQLLSRLIENFQVVVSDFDEDSVVFQGRCESYVMKLAEGKAKDVCRKLTNESSIVIGCDTAVFLRGKVMGKPRDIQEAFHMLKALSGNEHDVYSGIAIMDKVLHKTVKSFVRTTVKFSEIDDRCIKNYLKKGEYKDKAGAYGIQGYGGVFVKEIHGCYYNVVGLPLNKLYNMLSGMGVNL.

The Proton acceptor role is filled by Asp71.

The protein belongs to the Maf family. YhdE subfamily. A divalent metal cation is required as a cofactor.

It is found in the cytoplasm. The catalysed reaction is dTTP + H2O = dTMP + diphosphate + H(+). The enzyme catalyses UTP + H2O = UMP + diphosphate + H(+). Nucleoside triphosphate pyrophosphatase that hydrolyzes dTTP and UTP. May have a dual role in cell division arrest and in preventing the incorporation of modified nucleotides into cellular nucleic acids. The protein is dTTP/UTP pyrophosphatase of Clostridium kluyveri (strain NBRC 12016).